Reading from the N-terminus, the 89-residue chain is Small ribosomal subunit protein uS17 (89 aa).

Belongs to the universal ribosomal protein uS17 family. Part of the 30S ribosomal subunit.

One of the primary rRNA binding proteins, it binds specifically to the 5'-end of 16S ribosomal RNA. In Coxiella burnetii (strain RSA 331 / Henzerling II), this protein is Small ribosomal subunit protein uS17.